A 571-amino-acid polypeptide reads, in one-letter code: Glutamate--tRNA ligase (571 aa).

The 'HIGH' region motif lies at 110–120 (PNPNGPATLGS).

This sequence belongs to the class-I aminoacyl-tRNA synthetase family. Glutamate--tRNA ligase type 2 subfamily.

The protein localises to the cytoplasm. The enzyme catalyses tRNA(Glu) + L-glutamate + ATP = L-glutamyl-tRNA(Glu) + AMP + diphosphate. Its function is as follows. Catalyzes the attachment of glutamate to tRNA(Glu) in a two-step reaction: glutamate is first activated by ATP to form Glu-AMP and then transferred to the acceptor end of tRNA(Glu). The polypeptide is Glutamate--tRNA ligase (Methanosarcina barkeri (strain Fusaro / DSM 804)).